The following is an 86-amino-acid chain: Large ribosomal subunit protein bL31B (86 aa).

The protein belongs to the bacterial ribosomal protein bL31 family. Type B subfamily. As to quaternary structure, part of the 50S ribosomal subunit.

The polypeptide is Large ribosomal subunit protein bL31B (Chloroherpeton thalassium (strain ATCC 35110 / GB-78)).